The primary structure comprises 98 residues: Co-chaperonin GroES (98 aa).

It belongs to the GroES chaperonin family. Heptamer of 7 subunits arranged in a ring. Interacts with the chaperonin GroEL.

It is found in the cytoplasm. Together with the chaperonin GroEL, plays an essential role in assisting protein folding. The GroEL-GroES system forms a nano-cage that allows encapsulation of the non-native substrate proteins and provides a physical environment optimized to promote and accelerate protein folding. GroES binds to the apical surface of the GroEL ring, thereby capping the opening of the GroEL channel. This Rhizobium leguminosarum bv. trifolii (strain WSM2304) protein is Co-chaperonin GroES.